A 77-amino-acid chain; its full sequence is Chassatide C13 (77 aa).

Positions 1–24 (MAKFATQLLLFVLIASLVMLEVHA) are cleaved as a signal peptide. Positions 25-44 (SNTFQVPDLGKRLLMNRDPN) are cleaved as a propeptide — removed in mature form. Residues 45–75 (GFPCAESCVYIPCTVTALLGCSCRNRVCYRN) constitute a cross-link (cyclopeptide (Gly-Asn)). 3 disulfide bridges follow: C48–C65, C52–C67, and C57–C72. A propeptide spans 76-77 (EL) (removed in mature form).

Post-translationally, this is a cyclic peptide. As to expression, expressed in fruit and pedicel but not in root, leaf and stem (at protein level).

Probably participates in a plant defense mechanism. The sequence is that of Chassatide C13 from Chassalia chartacea (Chassalia curviflora).